Consider the following 350-residue polypeptide: S-adenosylmethionine:tRNA ribosyltransferase-isomerase (350 aa).

The protein belongs to the QueA family. In terms of assembly, monomer.

The protein resides in the cytoplasm. It catalyses the reaction 7-aminomethyl-7-carbaguanosine(34) in tRNA + S-adenosyl-L-methionine = epoxyqueuosine(34) in tRNA + adenine + L-methionine + 2 H(+). The protein operates within tRNA modification; tRNA-queuosine biosynthesis. Functionally, transfers and isomerizes the ribose moiety from AdoMet to the 7-aminomethyl group of 7-deazaguanine (preQ1-tRNA) to give epoxyqueuosine (oQ-tRNA). This chain is S-adenosylmethionine:tRNA ribosyltransferase-isomerase, found in Parvibaculum lavamentivorans (strain DS-1 / DSM 13023 / NCIMB 13966).